A 497-amino-acid chain; its full sequence is Zinc finger protein ZIC 2-B (497 aa).

2 disordered regions span residues 58–107 and 143–180; these read HMGA…TSQA and SAAAGGGQHGLFGPPAGSLHHHPHHHHQLSHGEHPQGH. Gly residues predominate over residues 66–88; the sequence is PGGGSGGGSGGGGGAGPNGGAGA. Positions 97–107 are enriched in polar residues; it reads PGQTSAFTSQA. The span at 161–171 shows a compositional bias: basic residues; sequence LHHHPHHHHQL. Residues 273–308 form a C2H2-type 1; atypical zinc finger; sequence LICKWIDPEQLNNPKKSCNKTFSTMHELVTHMSVEH. Residues 317–344 form a C2H2-type 2; atypical zinc finger; that stretch reads HICFWEECAREGKPFKAKYKLVNHIRVH. 3 C2H2-type zinc fingers span residues 350 to 374, 380 to 404, and 410 to 432; these read FPCPFPGCGKVFARSENLKIHKRTH, FQCEFEGCDRRFANSSDRKKHMHVH, and YLCKMCDKSYTHPSSLRKHMKVH. The disordered stretch occupies residues 423 to 473; that stretch reads SSLRKHMKVHESSPQGSESSPAASSGYESSTPPGLVSPNSETQNPNLSPAA. Positions 434 to 452 are enriched in low complexity; it reads SSPQGSESSPAASSGYESS. Positions 459–469 are enriched in polar residues; sequence SPNSETQNPNL.

It belongs to the GLI C2H2-type zinc-finger protein family.

Its subcellular location is the nucleus. The protein resides in the cytoplasm. In terms of biological role, transcriptional repressor that inhibits neurogenesis and induces neural and neural crest differentiation. Regulates anteroposterior patterning in early development by inhibiting expression of the nodal genes through the inhibition of vegt. Required for gastrulation movements and for proper anterior neural and axial development. May also act as a transcriptional activator. May bind to the minimal GLI-consensus sequence 5'-TGGGTGGTC-3'. The protein is Zinc finger protein ZIC 2-B (zic2-b) of Xenopus laevis (African clawed frog).